The sequence spans 101 residues: MSQKIRIKLKSYDHMLVDKSAEKIVKTVKTTGAVVTGPIPLPTHKKLFTVLRSPHVNKKAREQFEVMSYKRLIDIYSSSSKTIDALMKLELPSGVEVEIKV.

Belongs to the universal ribosomal protein uS10 family. In terms of assembly, part of the 30S ribosomal subunit.

In terms of biological role, involved in the binding of tRNA to the ribosomes. In Flavobacterium johnsoniae (strain ATCC 17061 / DSM 2064 / JCM 8514 / BCRC 14874 / CCUG 350202 / NBRC 14942 / NCIMB 11054 / UW101) (Cytophaga johnsonae), this protein is Small ribosomal subunit protein uS10.